The following is a 406-amino-acid chain: Testis-specific Y-encoded-like protein 5 (406 aa).

Positions 1–25 (MSGRSRGRKSSRAKGRGKGRARARV) are enriched in basic residues. 3 disordered regions span residues 1 to 67 (MSGR…PAEL), 132 to 164 (IGNRRVPGRKAPDTRSATGRGPQATVSGKPKMA), and 382 to 406 (RGEKGKEERPGPAKLSPAPAVRQPN). Residues 27–38 (AAAEDAWHDEKP) are compositionally biased toward basic and acidic residues. A compositionally biased stretch (low complexity) spans 49–62 (AAAQVQAGAAQGGA). Residues 382 to 392 (RGEKGKEERPG) show a composition bias toward basic and acidic residues.

It belongs to the nucleosome assembly protein (NAP) family. As to quaternary structure, interacts with USP7.

Involved in modulation of cell growth and cellular response to gamma radiation probably via regulation of the Akt signaling pathway. Involved in regulation of p53/TP53. Suppresses p53/TP53 protein levels and promotes its ubiquitination; the function is dependent on USP7 and independent on MDM2. Proposed to displace p53/TP53 from interaction with USP7. This Mus musculus (Mouse) protein is Testis-specific Y-encoded-like protein 5 (Tspyl5).